The chain runs to 535 residues: Sterol 26-hydroxylase, mitochondrial (535 aa).

Residues 1–36 constitute a mitochondrion transit peptide; the sequence is MAALGCARLRWALLGPRVAGCGLCPQGARAKAAIPT. Position 286 is an N6-acetyllysine (Lys286). A sterol-binding region spans residues 387 to 401; that stretch reads PLLKAVLKETLRLYP. Cys480 provides a ligand contact to heme. Lys524 is subject to N6-acetyllysine.

Belongs to the cytochrome P450 family. As to quaternary structure, interacts with HSP70; this interaction is required for initial targeting to mitochondria. Heme is required as a cofactor. As to expression, expressed in all tissues tested. Highest expression in liver and duodenum, followed by adrenal gland and lung. Low expression in kidney and spleen.

The protein localises to the mitochondrion inner membrane. It carries out the reaction 5beta-cholestane-3alpha,7alpha,12alpha-triol + 6 reduced [adrenodoxin] + 3 O2 + 5 H(+) = (25R)-3alpha,7alpha,12alpha-trihydroxy-5beta-cholestan-26-oate + 6 oxidized [adrenodoxin] + 4 H2O. The catalysed reaction is cholestanol + 2 reduced [adrenodoxin] + O2 + 2 H(+) = (25R)-26-hydroxycholestanol + 2 oxidized [adrenodoxin] + H2O. It catalyses the reaction (25R)-3beta-hydroxycholest-5-en-7-one-26-al + 2 reduced [adrenodoxin] + O2 + H(+) = (25R)-3beta-hydroxycholest-5-en-7-one-26-oate + 2 oxidized [adrenodoxin] + H2O. The enzyme catalyses (25R)-3beta,26-dihydroxycholest-5-en-7-one + 2 reduced [adrenodoxin] + O2 + 2 H(+) = (25R)-3beta-hydroxycholest-5-en-7-one-26-al + 2 oxidized [adrenodoxin] + 2 H2O. It carries out the reaction 7-oxocholesterol + 2 reduced [adrenodoxin] + O2 + 2 H(+) = (25R)-3beta,26-dihydroxycholest-5-en-7-one + 2 oxidized [adrenodoxin] + H2O. The catalysed reaction is calciol + 2 reduced [adrenodoxin] + O2 + 2 H(+) = calcidiol + 2 oxidized [adrenodoxin] + H2O. It catalyses the reaction (25R)-5beta-cholestane-3alpha,7alpha,12alpha,26-tetrol + 2 reduced [adrenodoxin] + O2 + 2 H(+) = (25R)-3alpha,7alpha,12alpha-trihydroxy-5beta-cholestan-26-al + 2 oxidized [adrenodoxin] + 2 H2O. The enzyme catalyses 2 reduced [adrenodoxin] + cholesterol + O2 + 2 H(+) = (25R)-cholest-5-ene-3beta,26-diol + 2 oxidized [adrenodoxin] + H2O. It carries out the reaction (25R)-3beta,4beta-dihydroxycholest-5-en-26-al + 2 reduced [adrenodoxin] + O2 + H(+) = (25R)-3beta,4beta-dihydroxycholest-5-en-26-oate + 2 oxidized [adrenodoxin] + H2O. The catalysed reaction is (25R)-4beta,26-dihydroxycholesterol + 2 reduced [adrenodoxin] + O2 + 2 H(+) = (25R)-3beta,4beta-dihydroxycholest-5-en-26-al + 2 oxidized [adrenodoxin] + 2 H2O. It catalyses the reaction 4beta-hydroxycholesterol + 2 reduced [adrenodoxin] + O2 + 2 H(+) = (25R)-4beta,26-dihydroxycholesterol + 2 oxidized [adrenodoxin] + H2O. The enzyme catalyses (25R)-3beta-hydroxy-5-cholesten-26-al + 2 reduced [adrenodoxin] + O2 + H(+) = (25R)-3beta-hydroxy-5-cholestenoate + 2 oxidized [adrenodoxin] + H2O. It carries out the reaction (25R)-cholest-5-ene-3beta,26-diol + 2 reduced [adrenodoxin] + O2 + 2 H(+) = (25R)-3beta-hydroxy-5-cholesten-26-al + 2 oxidized [adrenodoxin] + 2 H2O. The catalysed reaction is (25R)-3alpha,7alpha,12alpha-trihydroxy-5beta-cholestan-26-al + 2 reduced [adrenodoxin] + O2 + H(+) = (25R)-3alpha,7alpha,12alpha-trihydroxy-5beta-cholestan-26-oate + 2 oxidized [adrenodoxin] + H2O. It catalyses the reaction 5beta-cholestane-3alpha,7alpha,12alpha-triol + 2 reduced [adrenodoxin] + O2 + 2 H(+) = (25R)-5beta-cholestane-3alpha,7alpha,12alpha,26-tetrol + 2 oxidized [adrenodoxin] + H2O. It functions in the pathway hormone biosynthesis; cholecalciferol biosynthesis. Its pathway is steroid metabolism; cholesterol degradation. The protein operates within lipid metabolism; bile acid biosynthesis. Its function is as follows. Cytochrome P450 monooxygenase that catalyzes regio- and stereospecific hydroxylation of cholesterol and its derivatives. Hydroxylates (with R stereochemistry) the terminal methyl group of cholesterol side-chain in a three step reaction to yield at first a C26 alcohol, then a C26 aldehyde and finally a C26 acid. Regulates cholesterol homeostasis by catalyzing the conversion of excess cholesterol to bile acids via both the 'neutral' (classic) and the 'acid' (alternative) pathways. May also regulate cholesterol homeostasis via generation of active oxysterols, which act as ligands for NR1H2 and NR1H3 nuclear receptors, modulating the transcription of genes involved in lipid metabolism. Plays a role in cholestanol metabolism in the cerebellum. Similarly to cholesterol, hydroxylates cholestanol and may facilitate sterol diffusion through the blood-brain barrier to the systemic circulation for further degradation. Also hydroxylates retinal 7-ketocholesterol, a noxious oxysterol with pro-inflammatory and pro-apoptotic effects, and may play a role in its elimination from the retinal pigment epithelium. May play a redundant role in vitamin D biosynthesis. Catalyzes 25-hydroxylation of vitamin D3 that is required for its conversion to a functionally active form. This is Sterol 26-hydroxylase, mitochondrial (CYP27A1) from Oryctolagus cuniculus (Rabbit).